Here is an 87-residue protein sequence, read N- to C-terminus: Small ribosomal subunit protein bS18 (87 aa).

The interval 1 to 21 (MRHKPTPPKGNKSLGNALASK) is disordered.

This sequence belongs to the bacterial ribosomal protein bS18 family. As to quaternary structure, part of the 30S ribosomal subunit. Forms a tight heterodimer with protein bS6.

In terms of biological role, binds as a heterodimer with protein bS6 to the central domain of the 16S rRNA, where it helps stabilize the platform of the 30S subunit. This Chlorobium phaeobacteroides (strain DSM 266 / SMG 266 / 2430) protein is Small ribosomal subunit protein bS18.